We begin with the raw amino-acid sequence, 421 residues long: UPF0300 protein C737.04 (421 aa).

Belongs to the UPF0300 family.

It is found in the cytoplasm. The sequence is that of UPF0300 protein C737.04 from Schizosaccharomyces pombe (strain 972 / ATCC 24843) (Fission yeast).